The sequence spans 545 residues: CTP synthase (545 aa).

The amidoligase domain stretch occupies residues 1 to 266; that stretch reads MTTNYIFVTG…DDLVCARFGI (266 aa). A CTP-binding site is contributed by Ser14. Ser14 lines the UTP pocket. ATP contacts are provided by residues 15 to 20 and Asp72; that span reads SLGKGI. Residues Asp72 and Glu140 each contribute to the Mg(2+) site. Residues 147 to 149, 187 to 192, and Lys223 contribute to the CTP site; these read DIE and KTKPTQ. UTP is bound by residues 187–192 and Lys223; that span reads KTKPTQ. 239 to 241 is a binding site for ATP; it reads KDV. Residues 291 to 542 enclose the Glutamine amidotransferase type-1 domain; it reads TIGMVGKYTE…VKAAGQFQRG (252 aa). Gly352 contacts L-glutamine. Cys379 (nucleophile; for glutamine hydrolysis) is an active-site residue. L-glutamine is bound by residues 380-383, Glu403, and Arg470; that span reads LGMQ. Catalysis depends on residues His515 and Glu517.

It belongs to the CTP synthase family. In terms of assembly, homotetramer.

It catalyses the reaction UTP + L-glutamine + ATP + H2O = CTP + L-glutamate + ADP + phosphate + 2 H(+). It carries out the reaction L-glutamine + H2O = L-glutamate + NH4(+). The enzyme catalyses UTP + NH4(+) + ATP = CTP + ADP + phosphate + 2 H(+). The protein operates within pyrimidine metabolism; CTP biosynthesis via de novo pathway; CTP from UDP: step 2/2. With respect to regulation, allosterically activated by GTP, when glutamine is the substrate; GTP has no effect on the reaction when ammonia is the substrate. The allosteric effector GTP functions by stabilizing the protein conformation that binds the tetrahedral intermediate(s) formed during glutamine hydrolysis. Inhibited by the product CTP, via allosteric rather than competitive inhibition. In terms of biological role, catalyzes the ATP-dependent amination of UTP to CTP with either L-glutamine or ammonia as the source of nitrogen. Regulates intracellular CTP levels through interactions with the four ribonucleotide triphosphates. The polypeptide is CTP synthase (Vibrio cholerae serotype O1 (strain ATCC 39541 / Classical Ogawa 395 / O395)).